Here is a 246-residue protein sequence, read N- to C-terminus: UL16-binding protein 6 (246 aa).

A signal peptide spans 1-25 (MAAAAIPALLLCLPLLFLLFGWSRA). The tract at residues 29 to 117 (DPHSLCYDIT…IQLENYTPKE (89 aa)) is MHC class I alpha-1 like. C50 and C66 are oxidised to a cystine. Residues N68 and N82 are each glycosylated (N-linked (GlcNAc...) asparagine). Residues 118–210 (PLTLQARMSC…MDSTLEPSAG (93 aa)) form an MHC class I alpha-2 like region. Residues C127 and C190 are joined by a disulfide bond. G218 is lipidated: GPI-anchor amidated glycine. The propeptide at 219–246 (TTQLRATATTLILCCLLIILPCFILPGI) is removed in mature form.

Belongs to the MHC class I family. In terms of assembly, interacts with KLRK1/NKG2D. As to quaternary structure, (Microbial infection) In CMV-infected cells, interacts with the viral glycoprotein UL16; this interaction causes relocalization from the cell surface to the cytoplasm and prevents binding to and activation of KLRK1/NKG2D, providing CMV with an immune evasion mechanism. In terms of tissue distribution, widely expressed. Expressed in trachea. Constitutively expressed in peripheral blood mononuclear cells, including B-cells and natural killer cells, as well as CD4+ and CD8+ T-cells and monocytes. Tends to be up-regulated in various lymphoid malignancies, including chronic lymphocytic leukemia.

Its subcellular location is the cell membrane. It localises to the endoplasmic reticulum. Functionally, binds and activates the KLRK1/NKG2D receptor, mediating natural killer cell cytotoxicity. The polypeptide is UL16-binding protein 6 (RAET1L) (Homo sapiens (Human)).